The sequence spans 221 residues: FMN-dependent NADH:quinone oxidoreductase 1 (221 aa).

FMN contacts are provided by residues 17–19 (SAS) and 148–151 (SSGG).

Belongs to the azoreductase type 1 family. Homodimer. It depends on FMN as a cofactor.

The catalysed reaction is 2 a quinone + NADH + H(+) = 2 a 1,4-benzosemiquinone + NAD(+). It catalyses the reaction N,N-dimethyl-1,4-phenylenediamine + anthranilate + 2 NAD(+) = 2-(4-dimethylaminophenyl)diazenylbenzoate + 2 NADH + 2 H(+). In terms of biological role, quinone reductase that provides resistance to thiol-specific stress caused by electrophilic quinones. Its function is as follows. Also exhibits azoreductase activity. Catalyzes the reductive cleavage of the azo bond in aromatic azo compounds to the corresponding amines. This chain is FMN-dependent NADH:quinone oxidoreductase 1, found in Clostridium acetobutylicum (strain ATCC 824 / DSM 792 / JCM 1419 / IAM 19013 / LMG 5710 / NBRC 13948 / NRRL B-527 / VKM B-1787 / 2291 / W).